The following is a 144-amino-acid chain: Large ribosomal subunit protein uL15 (144 aa).

Positions 1-48 (MQLNNLKPAAGSKHAKRRVGRGIGSGLGKTAGRGHKGQKSRSGGFHKV) are disordered. Over residues 21 to 31 (RGIGSGLGKTA) the composition is skewed to gly residues.

Belongs to the universal ribosomal protein uL15 family. Part of the 50S ribosomal subunit.

In terms of biological role, binds to the 23S rRNA. The chain is Large ribosomal subunit protein uL15 from Cupriavidus taiwanensis (strain DSM 17343 / BCRC 17206 / CCUG 44338 / CIP 107171 / LMG 19424 / R1) (Ralstonia taiwanensis (strain LMG 19424)).